The sequence spans 237 residues: Phosphoribosylaminoimidazole-succinocarboxamide synthase (237 aa).

It belongs to the SAICAR synthetase family.

The enzyme catalyses 5-amino-1-(5-phospho-D-ribosyl)imidazole-4-carboxylate + L-aspartate + ATP = (2S)-2-[5-amino-1-(5-phospho-beta-D-ribosyl)imidazole-4-carboxamido]succinate + ADP + phosphate + 2 H(+). The protein operates within purine metabolism; IMP biosynthesis via de novo pathway; 5-amino-1-(5-phospho-D-ribosyl)imidazole-4-carboxamide from 5-amino-1-(5-phospho-D-ribosyl)imidazole-4-carboxylate: step 1/2. The protein is Phosphoribosylaminoimidazole-succinocarboxamide synthase of Fusobacterium nucleatum subsp. nucleatum (strain ATCC 25586 / DSM 15643 / BCRC 10681 / CIP 101130 / JCM 8532 / KCTC 2640 / LMG 13131 / VPI 4355).